A 576-amino-acid polypeptide reads, in one-letter code: G protein-coupled receptor kinase 6 (576 aa).

The N-terminal stretch occupies residues 1–185 (MELENIVANT…LERQPVTKNT (185 aa)). Positions 53-171 (YHSLCERQPI…LDSIYFNRFL (119 aa)) constitute an RGS domain. The Protein kinase domain occupies 186 to 448 (FRQYRVLGKG…AREVKEHPLF (263 aa)). Residues 192 to 200 (LGKGGFGEV), Lys-215, and 264 to 270 (TLMNGGD) contribute to the ATP site. Asp-311 (proton acceptor) is an active-site residue. 315 to 318 (ENIL) contacts ATP. The 66-residue stretch at 449-514 (KKLNFKRLGA…GSVSIPWQNE (66 aa)) folds into the AGC-kinase C-terminal domain. Ser-484 carries the post-translational modification Phosphoserine; by autocatalysis. At Thr-485 the chain carries Phosphothreonine; by autocatalysis. 3 S-palmitoyl cysteine lipidation sites follow: Cys-561, Cys-562, and Cys-565. 2 positions are modified to phosphoserine: Ser-566 and Ser-568.

This sequence belongs to the protein kinase superfamily. AGC Ser/Thr protein kinase family. GPRK subfamily. Interacts with GIT1. In terms of tissue distribution, widely expressed. Detectable in all brain areas examined.

The protein localises to the membrane. The enzyme catalyses [G-protein-coupled receptor] + ATP = [G-protein-coupled receptor]-phosphate + ADP + H(+). Its function is as follows. Specifically phosphorylates the activated forms of G protein-coupled receptors. Such receptor phosphorylation initiates beta-arrestin-mediated receptor desensitization, internalization, and signaling events leading to their desensitization. Seems to be involved in the desensitization of D2-like dopamine receptors in striatum and chemokine receptor CXCR4 which is critical for CXCL12-induced cell chemotaxis. Phosphorylates rhodopsin (RHO) (in vitro) and a non G-protein-coupled receptor: LRP6 during Wnt signaling (in vitro). The sequence is that of G protein-coupled receptor kinase 6 (Grk6) from Rattus norvegicus (Rat).